A 185-amino-acid polypeptide reads, in one-letter code: Neuronal vesicle trafficking-associated protein 1 (185 aa).

At 1 to 82 the chain is on the cytoplasmic side; it reads MVKLGNNFAE…ITEGVTERFK (82 aa). A helical; Signal-anchor for type II membrane protein transmembrane segment spans residues 83 to 103; the sequence is VSVLVLFALAFLTCVVFLVVY. Residues 104-185 lie on the Lumenal side of the membrane; sequence KVYKYDRACP…QETEAAEKSA (82 aa). Residues 129–164 are required for GRIP1 interaction; sequence ESYYAEQDSSAREKFYTVINHYNLAKQSITRSVSPW.

Belongs to the NSG family. In terms of assembly, forms a complex with GRIP1, GRIA2 and STX12 through direct interaction with GRIP1; controls the intracellular fate of AMPAR and the endosomal sorting of the GRIA2 subunit toward recycling and membrane targeting. Interacts with STX12. Interacts with APP; could regulate APP processing. Interacts with FAM171A1.

Its subcellular location is the membrane. It localises to the golgi apparatus. It is found in the trans-Golgi network membrane. The protein resides in the endosome membrane. The protein localises to the cell projection. Its subcellular location is the dendrite. It localises to the early endosome membrane. It is found in the late endosome membrane. The protein resides in the lysosome lumen. The protein localises to the recycling endosome membrane. Its subcellular location is the cytoplasmic vesicle membrane. It localises to the golgi stack membrane. It is found in the endosome. The protein resides in the multivesicular body membrane. The protein localises to the endoplasmic reticulum membrane. Its function is as follows. Plays a role in the recycling mechanism in neurons of multiple receptors, including AMPAR, APP and L1CAM and acts at the level of early endosomes to promote sorting of receptors toward a recycling pathway. Regulates sorting and recycling of GRIA2 through interaction with GRIP1 and then contributes to the regulation of synaptic transmission and plasticity by affecting the recycling and targeting of AMPA receptors to the synapse. Is required for faithful sorting of L1CAM to axons by facilitating trafficking from somatodendritic early endosome or the recycling endosome. In an other hand, induces apoptosis via the activation of CASP3 in response to DNA damage. The sequence is that of Neuronal vesicle trafficking-associated protein 1 from Macaca fascicularis (Crab-eating macaque).